A 168-amino-acid polypeptide reads, in one-letter code: MSQTVHFQGNPVTVANVIPQAGSKAQAFTLVAKDLSDVSLSQYAGKRKVLNIFPSIDTGVCAASVRKFNQLATEVENTVVLCVSADLPFAQSRFCGAEGLSNVITLSTLRNNEFLKNYGVEIVDGPLKGLAARAVIVLDENDNVIFSQLVDEITHEPDYDAALNVLKA.

The Thioredoxin domain occupies 19 to 168 (PQAGSKAQAF…YDAALNVLKA (150 aa)). The active-site Cysteine sulfenic acid (-SOH) intermediate is C61. A disulfide bridge connects residues C61 and C95.

It belongs to the peroxiredoxin family. Tpx subfamily. In terms of assembly, homodimer.

It catalyses the reaction a hydroperoxide + [thioredoxin]-dithiol = an alcohol + [thioredoxin]-disulfide + H2O. Thiol-specific peroxidase that catalyzes the reduction of hydrogen peroxide and organic hydroperoxides to water and alcohols, respectively. Plays a role in cell protection against oxidative stress by detoxifying peroxides. The polypeptide is Thiol peroxidase (Salmonella typhimurium (strain LT2 / SGSC1412 / ATCC 700720)).